We begin with the raw amino-acid sequence, 325 residues long: Probable arylamine N-acetyltransferase 1 (325 aa).

The Acyl-thioester intermediate role is filled by Cys72. Catalysis depends on residues His112 and Asp127.

Belongs to the arylamine N-acetyltransferase family.

The catalysed reaction is an arylamine + acetyl-CoA = an N-acetylarylamine + CoA. In Dictyostelium discoideum (Social amoeba), this protein is Probable arylamine N-acetyltransferase 1.